The sequence spans 344 residues: Acireductone dioxygenase (344 aa).

Fe(2+) is bound by residues His-92, His-94, Glu-98, and His-137. Residues His-92, His-94, Glu-98, and His-137 each contribute to the Ni(2+) site.

Belongs to the acireductone dioxygenase (ARD) family. It depends on Fe(2+) as a cofactor. The cofactor is Ni(2+).

The protein resides in the cytoplasm. It localises to the nucleus. It catalyses the reaction 1,2-dihydroxy-5-(methylsulfanyl)pent-1-en-3-one + O2 = 4-methylsulfanyl-2-oxobutanoate + formate + 2 H(+). The catalysed reaction is 1,2-dihydroxy-5-(methylsulfanyl)pent-1-en-3-one + O2 = 3-(methylsulfanyl)propanoate + CO + formate + 2 H(+). It functions in the pathway amino-acid biosynthesis; L-methionine biosynthesis via salvage pathway; L-methionine from S-methyl-5-thio-alpha-D-ribose 1-phosphate: step 5/6. Its function is as follows. Catalyzes 2 different reactions between oxygen and the acireductone 1,2-dihydroxy-3-keto-5-methylthiopentene (DHK-MTPene) depending upon the metal bound in the active site. Fe-containing acireductone dioxygenase (Fe-ARD) produces formate and 2-keto-4-methylthiobutyrate (KMTB), the alpha-ketoacid precursor of methionine in the methionine recycle pathway. Ni-containing acireductone dioxygenase (Ni-ARD) produces methylthiopropionate, carbon monoxide and formate, and does not lie on the methionine recycle pathway. The chain is Acireductone dioxygenase from Leishmania infantum.